A 1038-amino-acid polypeptide reads, in one-letter code: SEH-associated protein 4 (1038 aa).

The WD 1 repeat unit spans residues 50–90 (KDFGSITCLDYSESEIGMIGVGEKNGYLRIFNISGQNSSSP). 2 positions are modified to phosphoserine: Ser-123 and Ser-136. 3 WD repeats span residues 147–189 (KKQR…DSHE), 235–276 (QHPT…DQAS), and 544–587 (NTWR…SNQD).

The protein belongs to the WD repeat mio family. As to quaternary structure, component of the SEA complex composed of at least IML1/SEA1, RTC1/SEA2, MTC5/SEA3, NPR2, NPR3, SEA4, SEC13 and SEH1.

Its subcellular location is the cytoplasm. It localises to the vacuole membrane. In terms of biological role, component of the SEA complex which coats the vacuolar membrane and is involved in intracellular trafficking, autophagy, response to nitrogen starvation, and amino acid biogenesis. The protein is SEH-associated protein 4 (SEA4) of Saccharomyces cerevisiae (strain ATCC 204508 / S288c) (Baker's yeast).